Here is a 281-residue protein sequence, read N- to C-terminus: N-acetylmuramic acid 6-phosphate etherase (281 aa).

The 164-residue stretch at 63 to 226 (IVPRMKQGGR…TTSVMIQLGR (164 aa)) folds into the SIS domain. E91 functions as the Proton donor in the catalytic mechanism. Residue E122 is part of the active site.

This sequence belongs to the GCKR-like family. MurNAc-6-P etherase subfamily. As to quaternary structure, homodimer.

The catalysed reaction is N-acetyl-D-muramate 6-phosphate + H2O = N-acetyl-D-glucosamine 6-phosphate + (R)-lactate. The protein operates within amino-sugar metabolism; N-acetylmuramate degradation. In terms of biological role, specifically catalyzes the cleavage of the D-lactyl ether substituent of MurNAc 6-phosphate, producing GlcNAc 6-phosphate and D-lactate. The polypeptide is N-acetylmuramic acid 6-phosphate etherase (Bacteroides fragilis (strain ATCC 25285 / DSM 2151 / CCUG 4856 / JCM 11019 / LMG 10263 / NCTC 9343 / Onslow / VPI 2553 / EN-2)).